Reading from the N-terminus, the 482-residue chain is Protein farnesyltransferase subunit beta (482 aa).

PFTB repeat units follow at residues 131–172, 182–223, 230–271, and 278–319; these read ESNA…VTLG, REKM…SILN, TQGL…ILIN, and LDSL…VLLQ. Residues 256–259 and 298–301 contribute to the (2E,6E)-farnesyl diphosphate site; these read HGGY and RTNK. Residues D304 and C306 each contribute to the Zn(2+) site. (2E,6E)-farnesyl diphosphate is bound at residue 307-310; it reads YTFW. The disordered stretch occupies residues 329–372; the sequence is VHGSSHISEGTNEEHHAHDEDDLEDSDDDDDSDEDNDEDSVNGH. Residues 348-368 show a composition bias toward acidic residues; sequence EDDLEDSDDDDDSDEDNDEDS. Residues 391–433 form a PFTB 5 repeat; the sequence is SLGLQRYVLLCSKIPDGGFRDKPRKPRDFYHTCYCLSGLSVAQ. Zn(2+) is bound at residue H421.

Belongs to the protein prenyltransferase subunit beta family. In terms of assembly, heterodimer of FTA and FTB (farnesyltransferase). Heterodimer of an alpha and a beta subunit. Requires Zn(2+) as cofactor.

The enzyme catalyses L-cysteinyl-[protein] + (2E,6E)-farnesyl diphosphate = S-(2E,6E)-farnesyl-L-cysteinyl-[protein] + diphosphate. Its function is as follows. Catalyzes the transfer of a farnesyl moiety from farnesyl diphosphate to a cysteine at the fourth position from the C-terminus of several proteins having the C-terminal sequence Cys-aliphatic-aliphatic-X (CaaX). The beta subunit is responsible for peptide-binding. Acts as an abscisic acid (ABA) negative regulator by mediating ASG2 farnesylation and consequently monitoring its subcellular localization. Involved in responses to salt (NaCl) and osmotic (e.g. in response to mannitol and PEG) stresses. The protein is Protein farnesyltransferase subunit beta (FTB) of Arabidopsis thaliana (Mouse-ear cress).